Here is a 256-residue protein sequence, read N- to C-terminus: Endonuclease NucS (256 aa).

Residues Ala-62–Lys-97 are disordered.

This sequence belongs to the NucS endonuclease family.

The protein localises to the cytoplasm. Functionally, cleaves both 3' and 5' ssDNA extremities of branched DNA structures. The chain is Endonuclease NucS from Bifidobacterium longum (strain NCC 2705).